Here is a 469-residue protein sequence, read N- to C-terminus: UDP-N-acetylmuramoylalanine--D-glutamate ligase (469 aa).

110–116 (GTNGKST) serves as a coordination point for ATP.

The protein belongs to the MurCDEF family.

It is found in the cytoplasm. The catalysed reaction is UDP-N-acetyl-alpha-D-muramoyl-L-alanine + D-glutamate + ATP = UDP-N-acetyl-alpha-D-muramoyl-L-alanyl-D-glutamate + ADP + phosphate + H(+). Its pathway is cell wall biogenesis; peptidoglycan biosynthesis. Functionally, cell wall formation. Catalyzes the addition of glutamate to the nucleotide precursor UDP-N-acetylmuramoyl-L-alanine (UMA). The sequence is that of UDP-N-acetylmuramoylalanine--D-glutamate ligase from Synechococcus sp. (strain JA-3-3Ab) (Cyanobacteria bacterium Yellowstone A-Prime).